The following is a 162-amino-acid chain: Ribonuclease P protein component (162 aa).

The segment at methionine 1–leucine 62 is disordered. Over residues glycine 21–alanine 36 the composition is skewed to basic and acidic residues.

Belongs to the RnpA family. As to quaternary structure, consists of a catalytic RNA component (M1 or rnpB) and a protein subunit.

The catalysed reaction is Endonucleolytic cleavage of RNA, removing 5'-extranucleotides from tRNA precursor.. Functionally, RNaseP catalyzes the removal of the 5'-leader sequence from pre-tRNA to produce the mature 5'-terminus. It can also cleave other RNA substrates such as 4.5S RNA. The protein component plays an auxiliary but essential role in vivo by binding to the 5'-leader sequence and broadening the substrate specificity of the ribozyme. The protein is Ribonuclease P protein component of Thermus aquaticus.